Consider the following 335-residue polypeptide: Nod factor export ATP-binding protein I (335 aa).

Residues 37-267 (IDVASVTKSY…KIGCQVIEIY (231 aa)) enclose the ABC transporter domain. An ATP-binding site is contributed by 69–76 (GPNGAGKS).

It belongs to the ABC transporter superfamily. Lipooligosaccharide exporter (TC 3.A.1.102) family. As to quaternary structure, the complex is composed of two ATP-binding proteins (NodI) and two transmembrane proteins (NodJ).

The protein resides in the cell inner membrane. Its function is as follows. Part of the ABC transporter complex NodIJ involved in the export of the nodulation factors (Nod factors), the bacterial signal molecules that induce symbiosis and subsequent nodulation induction. Nod factors are LCO (lipo-chitin oligosaccharide), a modified beta-1,4-linked N-acetylglucosamine oligosaccharide. This subunit is responsible for energy coupling to the transport system. The chain is Nod factor export ATP-binding protein I from Rhizobium meliloti (strain 1021) (Ensifer meliloti).